The sequence spans 64 residues: Arasin 1 (64 aa).

An N-terminal signal peptide occupies residues 1-25; the sequence is MERRTLLVVLLVCSCVVAAAAEASP. The tract at residues 22–43 is disordered; sequence EASPSRWPSPGRPRPFPGRPKP. Positions 26–48 are pro/Arg-rich region responsible for antibacterial and antifungal activity; that stretch reads SRWPSPGRPRPFPGRPKPIFRPR. A compositionally biased stretch (pro residues) spans 31–43; sequence PGRPRPFPGRPKP. The segment at 49-62 is cystein-containing C-terminal region important for stability but not essential for antimicrobial activity; sequence PCNCYAPPCPCDRW. Intrachain disulfides connect Cys50–Cys59 and Cys52–Cys57. The propeptide occupies 63-64; it reads RH.

In terms of assembly, interacts with chitin through the N-terminal region (26-48). This interaction may be important, since chitin is a component of the fungal cell wall, as well as of the crab exoskeleton (permitting a possible action of arasin in wound healing in case of lesions). Disulfide bonds are important for activity especially against Gram-negative bacteria, since the linearization of the peptide causes a strong decrease of activity on these bacteria. As to expression, mainly expressed in hemocytes. No or very low expression in heart, gills, inestines, and epidermis.

Functionally, antimicrobial peptide that has a large activity spectrum with activity against Gram-positive, Gram-negative bacteria, as well as against fungi. Shows activity at micromolar concentrations. Displays minimal inhibitory concentration (MIC) values lower than minimal bactericidal concentrations (MBC). Synthetic peptides with similar activities than the full length peptide (composed of the first 23 or 25 amino acids (Arasin 1(26-48) or Arasin 1(26-50))) may have a dual mode of action depending on the peptide concentrations. At MIC concentrations, the peptide penetrates into the cytoplasm of target cells (tested on the Gram-negative E.coli). The two inner membrane proteins YgdD and SbmA may be required for this uptake. At concentrations higher than MIC, arasin may act by disrupting membranes. Full-length and N-terminal peptides do not show hemolytic activity. In Hyas araneus (Atlantic lyre crab), this protein is Arasin 1.